Reading from the N-terminus, the 247-residue chain is Geranylgeranylglyceryl phosphate synthase (247 aa).

The Mg(2+) site is built by Asp-23 and Ser-52. Sn-glycerol 1-phosphate-binding positions include 171 to 177, 203 to 204, and 225 to 226; these read YLEAGSG, GG, and GT.

It belongs to the GGGP/HepGP synthase family. Group II subfamily. Mg(2+) is required as a cofactor.

It is found in the cytoplasm. The enzyme catalyses sn-glycerol 1-phosphate + (2E,6E,10E)-geranylgeranyl diphosphate = sn-3-O-(geranylgeranyl)glycerol 1-phosphate + diphosphate. It functions in the pathway membrane lipid metabolism; glycerophospholipid metabolism. Its function is as follows. Prenyltransferase that catalyzes the transfer of the geranylgeranyl moiety of geranylgeranyl diphosphate (GGPP) to the C3 hydroxyl of sn-glycerol-1-phosphate (G1P). This reaction is the first ether-bond-formation step in the biosynthesis of archaeal membrane lipids. The chain is Geranylgeranylglyceryl phosphate synthase from Methanococcoides burtonii (strain DSM 6242 / NBRC 107633 / OCM 468 / ACE-M).